The primary structure comprises 361 residues: Adenosine kinase (361 aa).

The Nuclear localization signal motif lies at 7-15 (PKPKKLKVE). Residue D34 coordinates adenosine. S48 contributes to the Mg(2+) binding site. At Y76 the chain carries Phosphotyrosine. 2 residues coordinate Mg(2+): D146 and N147. Adenosine is bound at residue Q305. D316 is an active-site residue. D316 serves as the catalytic Proton acceptor.

It belongs to the carbohydrate kinase PfkB family. In terms of assembly, monomer. It depends on Mg(2+) as a cofactor. In terms of processing, the N-terminus is blocked.

It localises to the nucleus. The catalysed reaction is adenosine + ATP = AMP + ADP + H(+). It functions in the pathway purine metabolism; AMP biosynthesis via salvage pathway; AMP from adenosine: step 1/1. Activity is inhibited by 5-iodotubercidin and 5'-amino-5'-deoxyadenosine. Catalyzes the phosphorylation of the purine nucleoside adenosine at the 5' position in an ATP-dependent manner. Serves as a potential regulator of concentrations of extracellular adenosine and intracellular adenine nucleotides. The protein is Adenosine kinase (ADK) of Cricetulus griseus (Chinese hamster).